Here is a 1013-residue protein sequence, read N- to C-terminus: Tolloid-like protein 1 (1013 aa).

The first 30 residues, 1–30 (MGLGTLSPRMLVWLVASGIVFYGELWVCAG), serve as a signal peptide directing secretion. A propeptide spanning residues 31 to 147 (LDYDYTFDGN…GQNEKNRVPR (117 aa)) is cleaved from the precursor. The region spanning 148 to 347 (AATSRTERIW…AQARKLYRCP (200 aa)) is the Peptidase M12A domain. Asn-169 carries an N-linked (GlcNAc...) asparagine glycan. Disulfide bonds link Cys-190–Cys-346, Cys-210–Cys-232, Cys-212–Cys-213, and Cys-349–Cys-375. Zn(2+) is bound at residue His-240. Glu-241 is an active-site residue. Zn(2+)-binding residues include His-244 and His-250. CUB domains lie at 349–461 (CGET…YEAI) and 462–574 (CGGE…FFKE). 2 N-linked (GlcNAc...) asparagine glycosylation sites follow: Asn-359 and Asn-390. 15 disulfide bridges follow: Cys-402-Cys-424, Cys-462-Cys-488, Cys-515-Cys-537, Cys-578-Cys-590, Cys-586-Cys-599, Cys-601-Cys-614, Cys-618-Cys-644, Cys-671-Cys-693, Cys-734-Cys-745, Cys-741-Cys-754, Cys-756-Cys-769, Cys-774-Cys-800, Cys-827-Cys-849, Cys-887-Cys-917, and Cys-944-Cys-966. Positions 574 to 615 (EEDECAKPDRGGCEQRCLNTLGSYQCACEPGYELGPDRRSCE) constitute an EGF-like 1; calcium-binding domain. A CUB 3 domain is found at 618–730 (CGGLLTKLNG…KGFKAHFFSD (113 aa)). The N-linked (GlcNAc...) asparagine glycan is linked to Asn-626. The 41-residue stretch at 730 to 770 (DKDECSKDNGGCQHECVNTMGSYMCQCRNGFVLHDNKHDCK) folds into the EGF-like 2; calcium-binding domain. 2 consecutive CUB domains span residues 774–886 (CEQK…HSTE) and 887–1003 (CGGR…YKSI).

It depends on Zn(2+) as a cofactor.

It is found in the secreted. Its function is as follows. Protease which processes procollagen C-propeptides, such as chordin, pro-biglycan and pro-lysyl oxidase. Required for the embryonic development. Predominant protease, which in the development, influences dorsal-ventral patterning and skeletogenesis. This chain is Tolloid-like protein 1 (TLL1), found in Homo sapiens (Human).